The following is a 72-amino-acid chain: MPIWSGILVGVVALLAGVALGFFIARKYMMNYLQKNPPINEQMLKMMMMQMGQKPSQKKINQMMSAMNKQMK.

A helical transmembrane segment spans residues Ile-3 to Phe-23.

The protein belongs to the UPF0154 family.

Its subcellular location is the cell membrane. This chain is UPF0154 protein Bcer98_2334, found in Bacillus cytotoxicus (strain DSM 22905 / CIP 110041 / 391-98 / NVH 391-98).